The chain runs to 252 residues: Carboxymethylenebutenolidase (252 aa).

The segment at 1–28 (MCHNKSSAPPTPAHISIQQNRTPGTDPV) is disordered. Residues C126, D183, and H214 contribute to the active site.

Belongs to the dienelactone hydrolase family.

It carries out the reaction 2-(5-oxo-2,5-dihydrofuran-2-ylidene)acetate + H2O = 4-oxohex-2-enedioate + H(+). The protein operates within aromatic compound metabolism; 3-chlorocatechol degradation. Ring cleavage of cyclic ester dienelactone to produce maleylacetate. The chain is Carboxymethylenebutenolidase (clcD) from Rhodococcus opacus (Nocardia opaca).